The chain runs to 393 residues: Acetate kinase (393 aa).

Residue Asn-7 coordinates Mg(2+). Lys-14 is a binding site for ATP. Residue Arg-90 participates in substrate binding. Asp-147 (proton donor/acceptor) is an active-site residue. Residues 205-209 (HLGNG), 280-282 (DFR), and 328-332 (GIGEN) contribute to the ATP site. A Mg(2+)-binding site is contributed by Glu-380.

It belongs to the acetokinase family. Homodimer. The cofactor is Mg(2+). Requires Mn(2+) as cofactor.

The protein localises to the cytoplasm. The catalysed reaction is acetate + ATP = acetyl phosphate + ADP. It functions in the pathway metabolic intermediate biosynthesis; acetyl-CoA biosynthesis; acetyl-CoA from acetate: step 1/2. Its function is as follows. Catalyzes the formation of acetyl phosphate from acetate and ATP. Can also catalyze the reverse reaction. This Finegoldia magna (strain ATCC 29328 / DSM 20472 / WAL 2508) (Peptostreptococcus magnus) protein is Acetate kinase.